A 201-amino-acid chain; its full sequence is 3-isopropylmalate dehydratase small subunit (201 aa).

Belongs to the LeuD family. LeuD type 1 subfamily. In terms of assembly, heterodimer of LeuC and LeuD.

It catalyses the reaction (2R,3S)-3-isopropylmalate = (2S)-2-isopropylmalate. Its pathway is amino-acid biosynthesis; L-leucine biosynthesis; L-leucine from 3-methyl-2-oxobutanoate: step 2/4. In terms of biological role, catalyzes the isomerization between 2-isopropylmalate and 3-isopropylmalate, via the formation of 2-isopropylmaleate. This chain is 3-isopropylmalate dehydratase small subunit, found in Chloroflexus aurantiacus (strain ATCC 29366 / DSM 635 / J-10-fl).